Reading from the N-terminus, the 368-residue chain is Ceramide synthase hyl-1 (368 aa).

7 consecutive transmembrane segments (helical) span residues 27 to 47 (FVDLLVPIYLAIPLVIIRILW), 92 to 112 (ILECFWRFSYYTFAFLYGLYV), 138 to 158 (IWWYYMIETGFYYSLLIGSTF), 165 to 185 (FWQLMVHHVITIFLLSSSWTI), 191 to 211 (GTLILLSHDVSDVFLEGGKLV), 225 to 245 (FVLFFSSWVATRLIYYPFIVI), and 275 to 295 (LIVFALILLFFLHIFWTFIIL). Residues 90–303 (KKILECFWRF…ILRIAYRTST (214 aa)) form the TLC domain. The disordered stretch occupies residues 306–368 (QAKDVRSDSD…ARHRRAPRKE (63 aa)). A compositionally biased stretch (acidic residues) spans 343-353 (TDDDDDEGEEE). Over residues 357-368 (RKARHRRAPRKE) the composition is skewed to basic residues.

The protein belongs to the sphingosine N-acyltransferase family.

It localises to the membrane. It catalyses the reaction a very long-chain fatty acyl-CoA + a sphingoid base = an N-(very-long-chain fatty acyl)-sphingoid base + CoA + H(+). The enzyme catalyses 15-methylhexadecasphinganine + a fatty acyl-CoA = an N-acyl-15-methylhexadecasphinganine + CoA + H(+). The catalysed reaction is a fatty acyl-CoA + sphinganine = an N-acylsphinganine + CoA + H(+). It carries out the reaction sphinganine + tetradecanoyl-CoA = N-(tetradecanoyl)-sphinganine + CoA + H(+). It catalyses the reaction hexacosanoyl-CoA + sphinganine = N-hexacosanoylsphinganine + CoA + H(+). Its pathway is lipid metabolism; sphingolipid metabolism. Functionally, catalyzes the acylation of sphingoid bases to form ceramides, which are key players in cell signaling events such as extending lifespan and enhancing stress resistance. C.elegans contain specific sphingoid bases, which are unique or different in structure compared to the sphingoid bases found in other animals. Two examples of these distinctive compounds are: 15-methylhexadecasphinganine and 15-methylhexadecasphing-4-enine. Exhibits substrate preference for fatty acyl-coA chains containing carbon chain length (C16-C18) and very long chains (24 carbons and more). In Caenorhabditis elegans, this protein is Ceramide synthase hyl-1 (hyl-1).